A 287-amino-acid polypeptide reads, in one-letter code: Protease HtpX (287 aa).

Helical transmembrane passes span 4–24 and 33–53; these read IFLL…VMSI and GGLL…SLAI. His-139 serves as a coordination point for Zn(2+). Glu-140 is an active-site residue. His-143 serves as a coordination point for Zn(2+). The next 2 helical transmembrane spans lie at 154 to 174 and 195 to 215; these read LIQG…AGII and AVVF…VAYF. Residue Glu-220 coordinates Zn(2+).

This sequence belongs to the peptidase M48B family. Requires Zn(2+) as cofactor.

The protein resides in the cell inner membrane. In Shewanella baltica (strain OS223), this protein is Protease HtpX.